A 572-amino-acid chain; its full sequence is Proline--tRNA ligase (572 aa).

The protein belongs to the class-II aminoacyl-tRNA synthetase family. ProS type 1 subfamily. In terms of assembly, homodimer.

Its subcellular location is the cytoplasm. The enzyme catalyses tRNA(Pro) + L-proline + ATP = L-prolyl-tRNA(Pro) + AMP + diphosphate. In terms of biological role, catalyzes the attachment of proline to tRNA(Pro) in a two-step reaction: proline is first activated by ATP to form Pro-AMP and then transferred to the acceptor end of tRNA(Pro). As ProRS can inadvertently accommodate and process non-cognate amino acids such as alanine and cysteine, to avoid such errors it has two additional distinct editing activities against alanine. One activity is designated as 'pretransfer' editing and involves the tRNA(Pro)-independent hydrolysis of activated Ala-AMP. The other activity is designated 'posttransfer' editing and involves deacylation of mischarged Ala-tRNA(Pro). The misacylated Cys-tRNA(Pro) is not edited by ProRS. The chain is Proline--tRNA ligase from Haemophilus influenzae (strain PittEE).